The primary structure comprises 312 residues: UDP-N-acetylenolpyruvoylglucosamine reductase (312 aa).

In terms of domain architecture, FAD-binding PCMH-type spans 33–199; the sequence is RVGGKAEWYC…TGATLQLLPG (167 aa). R178 is a catalytic residue. Catalysis depends on S229, which acts as the Proton donor. E299 is an active-site residue.

It belongs to the MurB family. The cofactor is FAD.

It localises to the cytoplasm. It carries out the reaction UDP-N-acetyl-alpha-D-muramate + NADP(+) = UDP-N-acetyl-3-O-(1-carboxyvinyl)-alpha-D-glucosamine + NADPH + H(+). Its pathway is cell wall biogenesis; peptidoglycan biosynthesis. Functionally, cell wall formation. The polypeptide is UDP-N-acetylenolpyruvoylglucosamine reductase (Synechococcus sp. (strain JA-3-3Ab) (Cyanobacteria bacterium Yellowstone A-Prime)).